Consider the following 228-residue polypeptide: Protein-L-isoaspartate O-methyltransferase (228 aa).

Ser74 is a catalytic residue.

It belongs to the methyltransferase superfamily. L-isoaspartyl/D-aspartyl protein methyltransferase family.

It localises to the cytoplasm. It catalyses the reaction [protein]-L-isoaspartate + S-adenosyl-L-methionine = [protein]-L-isoaspartate alpha-methyl ester + S-adenosyl-L-homocysteine. Catalyzes the methyl esterification of L-isoaspartyl residues in peptides and proteins that result from spontaneous decomposition of normal L-aspartyl and L-asparaginyl residues. It plays a role in the repair and/or degradation of damaged proteins. This chain is Protein-L-isoaspartate O-methyltransferase, found in Methylorubrum extorquens (strain PA1) (Methylobacterium extorquens).